Reading from the N-terminus, the 200-residue chain is Holliday junction branch migration complex subunit RuvA (200 aa).

A domain I region spans residues 1–63; that stretch reads MIALLTGQIA…EDAILLYGFR (63 aa). Residues 64-142 form a domain II region; that stretch reads TRTEKSFFQL…KLDSGSIPAG (79 aa). The interval 143 to 153 is flexible linker; it reads DAVGRSLPAGS. Positions 153-200 are domain III; the sequence is SVLDDVSSALVNLGYKDPQVRKVLAELDCAGSASVEEVLKQALKILMK.

Belongs to the RuvA family. In terms of assembly, homotetramer. Forms an RuvA(8)-RuvB(12)-Holliday junction (HJ) complex. HJ DNA is sandwiched between 2 RuvA tetramers; dsDNA enters through RuvA and exits via RuvB. An RuvB hexamer assembles on each DNA strand where it exits the tetramer. Each RuvB hexamer is contacted by two RuvA subunits (via domain III) on 2 adjacent RuvB subunits; this complex drives branch migration. In the full resolvosome a probable DNA-RuvA(4)-RuvB(12)-RuvC(2) complex forms which resolves the HJ.

It is found in the cytoplasm. Its function is as follows. The RuvA-RuvB-RuvC complex processes Holliday junction (HJ) DNA during genetic recombination and DNA repair, while the RuvA-RuvB complex plays an important role in the rescue of blocked DNA replication forks via replication fork reversal (RFR). RuvA specifically binds to HJ cruciform DNA, conferring on it an open structure. The RuvB hexamer acts as an ATP-dependent pump, pulling dsDNA into and through the RuvAB complex. HJ branch migration allows RuvC to scan DNA until it finds its consensus sequence, where it cleaves and resolves the cruciform DNA. This chain is Holliday junction branch migration complex subunit RuvA, found in Trichlorobacter lovleyi (strain ATCC BAA-1151 / DSM 17278 / SZ) (Geobacter lovleyi).